Reading from the N-terminus, the 423-residue chain is CinA-like protein (423 aa).

Belongs to the CinA family.

The chain is CinA-like protein from Chlorobium chlorochromatii (strain CaD3).